The sequence spans 341 residues: tRNA N6-adenosine threonylcarbamoyltransferase (341 aa).

2 residues coordinate Fe cation: His111 and His115. Residues 133 to 137 (AVSGG), Asp166, Gly179, Asp183, and Asn273 each bind substrate. Asp301 is a Fe cation binding site.

This sequence belongs to the KAE1 / TsaD family. Fe(2+) is required as a cofactor.

Its subcellular location is the cytoplasm. It catalyses the reaction L-threonylcarbamoyladenylate + adenosine(37) in tRNA = N(6)-L-threonylcarbamoyladenosine(37) in tRNA + AMP + H(+). Functionally, required for the formation of a threonylcarbamoyl group on adenosine at position 37 (t(6)A37) in tRNAs that read codons beginning with adenine. Is involved in the transfer of the threonylcarbamoyl moiety of threonylcarbamoyl-AMP (TC-AMP) to the N6 group of A37, together with TsaE and TsaB. TsaD likely plays a direct catalytic role in this reaction. In Geotalea daltonii (strain DSM 22248 / JCM 15807 / FRC-32) (Geobacter daltonii), this protein is tRNA N6-adenosine threonylcarbamoyltransferase.